The following is a 267-amino-acid chain: B3 domain-containing protein Os02g0455800 (267 aa).

A DNA-binding region (TF-B3) is located at residues 30–131; it reads EKFLMPSDLC…RLFICCRLGT (102 aa). Residues 172 to 221 form a disordered region; it reads QARLHDGNQDGGGAPSRHVPSSGRRVEAQLSRVSSRRQRRTMKHSIPEPT. Basic residues predominate over residues 205-214; it reads SSRRQRRTMK.

It localises to the nucleus. This Oryza sativa subsp. japonica (Rice) protein is B3 domain-containing protein Os02g0455800.